We begin with the raw amino-acid sequence, 386 residues long: Succinate--CoA ligase [ADP-forming] subunit beta (386 aa).

Residues 9–244 (KQVLRSSNLN…DSQIDAKEAA (236 aa)) enclose the ATP-grasp domain. ATP-binding positions include K46, 53–55 (GRG), E99, L102, and E107. Mg(2+)-binding residues include N199 and D213. Substrate-binding positions include N264 and 321 to 323 (GIV).

The protein belongs to the succinate/malate CoA ligase beta subunit family. Heterotetramer of two alpha and two beta subunits. The cofactor is Mg(2+).

The catalysed reaction is succinate + ATP + CoA = succinyl-CoA + ADP + phosphate. The enzyme catalyses GTP + succinate + CoA = succinyl-CoA + GDP + phosphate. It functions in the pathway carbohydrate metabolism; tricarboxylic acid cycle; succinate from succinyl-CoA (ligase route): step 1/1. Its function is as follows. Succinyl-CoA synthetase functions in the citric acid cycle (TCA), coupling the hydrolysis of succinyl-CoA to the synthesis of either ATP or GTP and thus represents the only step of substrate-level phosphorylation in the TCA. The beta subunit provides nucleotide specificity of the enzyme and binds the substrate succinate, while the binding sites for coenzyme A and phosphate are found in the alpha subunit. In Thiobacillus denitrificans (strain ATCC 25259 / T1), this protein is Succinate--CoA ligase [ADP-forming] subunit beta.